The following is a 341-amino-acid chain: MTTVPCFIAGLPKAELHLHIEGTLEPAMMLRLAERNRQPPPFPDVETAEKAYRFTNLQSFLDIYYRSTEVLVTEEDFYDLTLAYLEKAASQKIGHAEIFFDPQAHTVRGIAFATVLRGMEEACREAHSRLGISTRLIMCILRHLSEQEGMTMLNEAVRWKRWITGIGLDSSERGNPPSKFHNLYREARREGFFLTAHAGEEGSAASVKETLDLLHVDRIDHGVRCMDDPALVKELVRRAVPLTVCPLSNVKLQVFGSMQEHNLKAMLEKGLMVTLNSDDPAYFGGYLNDNFTAAAEALDLSFSDIIRLAANSFNASMLSIVQKKIHLLELADYARGFAPGH.

The Zn(2+) site is built by histidine 17, histidine 19, and histidine 197. Glutamate 200 functions as the Proton donor in the catalytic mechanism. Residue aspartate 278 coordinates Zn(2+). Substrate is bound at residue aspartate 279.

Belongs to the metallo-dependent hydrolases superfamily. Adenosine and AMP deaminases family. Adenine deaminase type 2 subfamily. Zn(2+) is required as a cofactor.

It carries out the reaction adenine + H2O + H(+) = hypoxanthine + NH4(+). In terms of biological role, catalyzes the hydrolytic deamination of adenine to hypoxanthine. Plays an important role in the purine salvage pathway and in nitrogen catabolism. The chain is Adenine deaminase from Chlorobium luteolum (strain DSM 273 / BCRC 81028 / 2530) (Pelodictyon luteolum).